Here is a 1315-residue protein sequence, read N- to C-terminus: Myopalladin (1315 aa).

Disordered stretches follow at residues 19-60, 81-145, 166-204, and 230-266; these read SYLA…DLPD, INHD…TQSK, HSSK…TERR, and EAKR…LGQP. 2 stretches are compositionally biased toward basic and acidic residues: residues 23–35 and 84–104; these read ETRH…RSRA and DPLE…DQTK. Ser99 and Ser129 each carry phosphoserine. Residues 166–180 are compositionally biased toward basic residues; the sequence is HSSKRIRPRACKNHK. A compositionally biased stretch (polar residues) spans 184–199; the sequence is ESQNKVLQENSPTFSD. The stretch at 219 to 240 forms a coiled coil; that stretch reads DNELNHAIEQREAKRREAELAA. Residue Thr249 is modified to Phosphothreonine. The Ig-like 1 domain occupies 267–357; sequence PRFTQKLRSR…DSTSAEIYIE (91 aa). Cys288 and Cys339 are joined by a disulfide. Residues 359–392 are disordered; that stretch reads VSSSDSEGDPNKEEMNRIQKPNEVSSPPTTSAAI. Positions 432 to 528 constitute an Ig-like 2 domain; that stretch reads PVFTKMLQNL…GTVSSIAQLD (97 aa). A disulfide bridge connects residues Cys453 and Cys512. Disordered regions lie at residues 535–652, 674–704, and 725–747; these read ISDN…VLAK, LQNT…SSKQ, and SSTS…NTPQ. Residues 609–623 show a composition bias toward polar residues; sequence SSGSGAANTSQTRPN. Phosphoserine is present on Ser641. Residues 725–741 are compositionally biased toward low complexity; sequence SSTSTATVSPSSSPVFT. Ser754 is modified (phosphoserine). Disordered stretches follow at residues 762 to 814 and 840 to 865; these read HPST…TPVS and NAMG…KAPQ. Pro residues predominate over residues 779-790; that stretch reads PAPPSPAEPAAP. Ser809 and Ser814 each carry phosphoserine. Phosphoserine is present on residues Ser903 and Ser924. 3 Ig-like domains span residues 941–1025, 1068–1157, and 1167–1257; these read PIFD…GRIS, PHFL…LELT, and PVIL…ARLD. Cys1089 and Cys1141 are joined by a disulfide.

This sequence belongs to the myotilin/palladin family. Interacts with TTN/titin, NEB, NEBL, ACTN2 and CARP.

It localises to the cytoplasm. The protein resides in the nucleus. The protein localises to the myofibril. Its subcellular location is the sarcomere. It is found in the z line. Its function is as follows. Component of the sarcomere that tethers together nebulin (skeletal muscle) and nebulette (cardiac muscle) to alpha-actinin, at the Z lines. In Mus musculus (Mouse), this protein is Myopalladin (Mypn).